The chain runs to 800 residues: DNA topoisomerase 4 subunit A (800 aa).

Residues leucine 31–glutamate 495 enclose the Topo IIA-type catalytic domain. The active-site O-(5'-phospho-DNA)-tyrosine intermediate is tyrosine 119.

The protein belongs to the type II topoisomerase GyrA/ParC subunit family. ParC type 2 subfamily. In terms of assembly, heterotetramer composed of ParC and ParE.

It is found in the cell membrane. The catalysed reaction is ATP-dependent breakage, passage and rejoining of double-stranded DNA.. Functionally, topoisomerase IV is essential for chromosome segregation. It relaxes supercoiled DNA. Performs the decatenation events required during the replication of a circular DNA molecule. This chain is DNA topoisomerase 4 subunit A, found in Staphylococcus aureus (strain N315).